The chain runs to 555 residues: Urocanate hydratase (555 aa).

NAD(+) contacts are provided by residues 51 to 52 (GG), Gln129, 175 to 177 (GMG), Glu195, Arg200, 241 to 242 (NA), 262 to 266 (QTSAH), 272 to 273 (YL), and Tyr321. The active site involves Cys409. Gly491 is an NAD(+) binding site.

It belongs to the urocanase family. It depends on NAD(+) as a cofactor.

The protein resides in the cytoplasm. It carries out the reaction 4-imidazolone-5-propanoate = trans-urocanate + H2O. It participates in amino-acid degradation; L-histidine degradation into L-glutamate; N-formimidoyl-L-glutamate from L-histidine: step 2/3. Its function is as follows. Catalyzes the conversion of urocanate to 4-imidazolone-5-propionate. The polypeptide is Urocanate hydratase (Rhizorhabdus wittichii (strain DSM 6014 / CCUG 31198 / JCM 15750 / NBRC 105917 / EY 4224 / RW1) (Sphingomonas wittichii)).